We begin with the raw amino-acid sequence, 338 residues long: Starch-binding domain-containing protein 1 (338 aa).

The Extracellular segment spans residues 1-6 (MGAVWS). Residues 7-23 (ALLVGGGLAGALILWLL) traverse the membrane as a helical segment. The Cytoplasmic portion of the chain corresponds to 24–338 (RGDSGAPGKD…KVVHGWWGIH (315 aa)). Disordered regions lie at residues 30 to 73 (PGKD…RELV) and 120 to 148 (KIPDTHSRADSEAARNQSPGSHGGEWRLP). A compositionally biased stretch (low complexity) spans 36-52 (AEPPQKGAPPGEAAAPG). The span at 53–62 (DGPGGGGSGG) shows a compositional bias: gly residues. S68 carries the post-translational modification Phosphoserine. The span at 122-132 (PDTHSRADSEA) shows a compositional bias: basic and acidic residues. Residues S140, S167, and S179 each carry the phosphoserine modification. An LIR motif is present at residues 185-191 (HEDWEVV). 7 positions are modified to phosphoserine: S195, S196, S205, S209, S212, S220, and S223. The CBM20 domain maps to 238–337 (SLKPQQVSIQ…DKVVHGWWGI (100 aa)).

As to quaternary structure, interacts with the ATG8 family proteins GABARAP and GABARAPL1. Interacts with several glycogen-associated proteins, such as GYS2 (liver glycogen synthase), GDE (glycogen debranching enzyme), GBE1 (glycogen branching enzyme 1) and EPM2A (Laforin). Ubiquitinated, which leads to proteasomal degradation. Expressed at high level in glycogen-accumulating organs such as muscle and liver. Trace signals are also found in brain, kidney, and pancreas.

The protein resides in the preautophagosomal structure membrane. Its subcellular location is the endoplasmic reticulum membrane. The protein localises to the cell membrane. It is found in the sarcolemma. It localises to the T-tubule. In terms of biological role, acts as a cargo receptor for glycogen. Delivers its cargo to an autophagic pathway called glycophagy, resulting in the transport of glycogen to lysosomes. This is Starch-binding domain-containing protein 1 from Mus musculus (Mouse).